The primary structure comprises 115 residues: U3-lycotoxin-Ls1c (115 aa).

Residues 1–20 (MKFVLLFGVLLVTLFSYSSA) form the signal peptide. Positions 21 to 44 (EMLDDFDQADEDELLSLIEKEEAR) are excised as a propeptide. 4 cysteine pairs are disulfide-bonded: C48–C63, C55–C72, C62–C87, and C74–C85.

This sequence belongs to the neurotoxin 19 (CSTX) family. 01 subfamily. In terms of tissue distribution, expressed by the venom gland.

It is found in the secreted. The chain is U3-lycotoxin-Ls1c from Lycosa singoriensis (Wolf spider).